Consider the following 188-residue polypeptide: Elongation factor P (188 aa).

Lys-34 is subject to N6-(3,6-diaminohexanoyl)-5-hydroxylysine.

The protein belongs to the elongation factor P family. In terms of processing, may be beta-lysylated on the epsilon-amino group of Lys-34 by the combined action of EpmA and EpmB, and then hydroxylated on the C5 position of the same residue by EpmC (if this protein is present). Lysylation is critical for the stimulatory effect of EF-P on peptide-bond formation. The lysylation moiety may extend toward the peptidyltransferase center and stabilize the terminal 3-CCA end of the tRNA. Hydroxylation of the C5 position on Lys-34 may allow additional potential stabilizing hydrogen-bond interactions with the P-tRNA.

The protein localises to the cytoplasm. It participates in protein biosynthesis; polypeptide chain elongation. Involved in peptide bond synthesis. Alleviates ribosome stalling that occurs when 3 or more consecutive Pro residues or the sequence PPG is present in a protein, possibly by augmenting the peptidyl transferase activity of the ribosome. Modification of Lys-34 is required for alleviation. The protein is Elongation factor P of Vibrio vulnificus (strain CMCP6).